A 281-amino-acid chain; its full sequence is Tetraspanin-5 (281 aa).

The Cytoplasmic segment spans residues 1-7; that stretch reads MNRMSNT. A helical membrane pass occupies residues 8–28; the sequence is VIGFLNILTLISSIVLLGSAL. Residues 29-44 are Extracellular-facing; sequence WMGRSKTTCEHFLQKP. A helical membrane pass occupies residues 45–65; that stretch reads LLILGLAILILSVAGLVGACC. Residues 66–74 are Cytoplasmic-facing; that stretch reads DVAWVLWVY. The helical transmembrane segment at 75–95 threads the bilayer; sequence LFFMVFIIVALMGLTLFGFIV. At 96–221 the chain is on the extracellular side; that stretch reads TSHSGGVVVD…TVRRDWHKLS (126 aa). The helical transmembrane segment at 222-242 threads the bilayer; the sequence is LVNVIVVIFLIAVYCVGCCAF. The Cytoplasmic segment spans residues 243–281; that stretch reads KNAKRPQHYGFPYGRYGMSKSRPGWEQSWSRWWHGRDRY.

This sequence belongs to the tetraspanin (TM4SF) family.

The protein localises to the membrane. In terms of biological role, may be involved in the regulation of cell differentiation. In Arabidopsis thaliana (Mouse-ear cress), this protein is Tetraspanin-5 (TET5).